Consider the following 235-residue polypeptide: Large ribosomal subunit protein uL1 (235 aa).

Belongs to the universal ribosomal protein uL1 family. As to quaternary structure, part of the 50S ribosomal subunit.

Its function is as follows. Binds directly to 23S rRNA. The L1 stalk is quite mobile in the ribosome, and is involved in E site tRNA release. Protein L1 is also a translational repressor protein, it controls the translation of the L11 operon by binding to its mRNA. In Symbiobacterium thermophilum (strain DSM 24528 / JCM 14929 / IAM 14863 / T), this protein is Large ribosomal subunit protein uL1.